The primary structure comprises 97 residues: NADH-ubiquinone oxidoreductase chain 4L (97 aa).

A run of 3 helical transmembrane segments spans residues 1-21, 25-45, and 57-77; these read MSYL…IILN, LIIM…LLLF, and IFAI…LAIM.

The protein belongs to the complex I subunit 4L family.

The protein localises to the mitochondrion membrane. The catalysed reaction is a ubiquinone + NADH + 5 H(+)(in) = a ubiquinol + NAD(+) + 4 H(+)(out). Its function is as follows. Core subunit of the mitochondrial membrane respiratory chain NADH dehydrogenase (Complex I) that is believed to belong to the minimal assembly required for catalysis. Complex I functions in the transfer of electrons from NADH to the respiratory chain. The immediate electron acceptor for the enzyme is believed to be ubiquinone. The chain is NADH-ubiquinone oxidoreductase chain 4L (ND4L) from Sarcophyton glaucum (Toadstool umbrella leather coral).